Consider the following 170-residue polypeptide: Translationally-controlled tumor protein homolog (170 aa).

Residues 1-170 (MIIYKCIISG…FKDGLLAEKC (170 aa)) enclose the TCTP domain.

This sequence belongs to the TCTP family.

The protein resides in the cytoplasm. In terms of biological role, involved in calcium binding and microtubule stabilization. The polypeptide is Translationally-controlled tumor protein homolog (tpt1) (Lateolabrax japonicus (Japanese sea perch)).